Reading from the N-terminus, the 208-residue chain is ATP synthase subunit b (208 aa).

Residues methionine 1–serine 18 are compositionally biased toward polar residues. The segment at methionine 1 to alanine 26 is disordered. The helical transmembrane segment at serine 56–proline 78 threads the bilayer.

It belongs to the ATPase B chain family. As to quaternary structure, F-type ATPases have 2 components, F(1) - the catalytic core - and F(0) - the membrane proton channel. F(1) has five subunits: alpha(3), beta(3), gamma(1), delta(1), epsilon(1). F(0) has three main subunits: a(1), b(2) and c(10-14). The alpha and beta chains form an alternating ring which encloses part of the gamma chain. F(1) is attached to F(0) by a central stalk formed by the gamma and epsilon chains, while a peripheral stalk is formed by the delta and b chains.

It localises to the cell inner membrane. F(1)F(0) ATP synthase produces ATP from ADP in the presence of a proton or sodium gradient. F-type ATPases consist of two structural domains, F(1) containing the extramembraneous catalytic core and F(0) containing the membrane proton channel, linked together by a central stalk and a peripheral stalk. During catalysis, ATP synthesis in the catalytic domain of F(1) is coupled via a rotary mechanism of the central stalk subunits to proton translocation. Its function is as follows. Component of the F(0) channel, it forms part of the peripheral stalk, linking F(1) to F(0). This chain is ATP synthase subunit b, found in Brucella melitensis biotype 1 (strain ATCC 23456 / CCUG 17765 / NCTC 10094 / 16M).